The sequence spans 110 residues: ATP-dependent Clp protease adapter protein ClpS (110 aa).

Basic and acidic residues predominate over residues 1–10 (MSDDRRRGDE). Residues 1-27 (MSDDRRRGDEDGGAGTGVITKTKPKTK) form a disordered region.

The protein belongs to the ClpS family. As to quaternary structure, binds to the N-terminal domain of the chaperone ClpA.

Involved in the modulation of the specificity of the ClpAP-mediated ATP-dependent protein degradation. The chain is ATP-dependent Clp protease adapter protein ClpS from Parvibaculum lavamentivorans (strain DS-1 / DSM 13023 / NCIMB 13966).